The sequence spans 212 residues: MHETRLLPQPHDLLWGMSTDRLDAAAPTWAAEVLAAGRPVVVRRAPARDGWIAVGVRGHGREQRHAAWMPRAAIRRRVQPEQLTGGGEREGVCAPLRALALLQPQLDALCRQRGLAWGVTGGAGYQLATGVTVLGEHSDLDLLLRVPRPLERRQALALLERLEQLPCRVDLQLETPAGAVALRDWASPAARVLLKAGSGARLVGDPWREVAA.

Residues D139 and D141 contribute to the active site.

This sequence belongs to the MdcG family.

The enzyme catalyses apo-[malonate decarboxylase ACP] + 2'-(5''-triphospho-alpha-D-ribosyl)-3'-dephospho-CoA = holo-[malonate decarboxylase ACP] + diphosphate. In terms of biological role, transfers 2'-(5-triphosphoribosyl)-3'-dephosphocoenzyme-A to the apo-[acyl-carrier-protein] of the malonate decarboxylase to yield holo-[acyl-carrier-protein]. This chain is Phosphoribosyl-dephospho-CoA transferase, found in Azotobacter vinelandii (strain DJ / ATCC BAA-1303).